A 280-amino-acid chain; its full sequence is Bifunctional protein FolD (280 aa).

NADP(+) is bound by residues 166-168 (GRS) and Ser-191.

The protein belongs to the tetrahydrofolate dehydrogenase/cyclohydrolase family. As to quaternary structure, homodimer.

The catalysed reaction is (6R)-5,10-methylene-5,6,7,8-tetrahydrofolate + NADP(+) = (6R)-5,10-methenyltetrahydrofolate + NADPH. It carries out the reaction (6R)-5,10-methenyltetrahydrofolate + H2O = (6R)-10-formyltetrahydrofolate + H(+). The protein operates within one-carbon metabolism; tetrahydrofolate interconversion. Functionally, catalyzes the oxidation of 5,10-methylenetetrahydrofolate to 5,10-methenyltetrahydrofolate and then the hydrolysis of 5,10-methenyltetrahydrofolate to 10-formyltetrahydrofolate. In Cellvibrio japonicus (strain Ueda107) (Pseudomonas fluorescens subsp. cellulosa), this protein is Bifunctional protein FolD.